A 312-amino-acid polypeptide reads, in one-letter code: Beta-ketoacyl-[acyl-carrier-protein] synthase III (312 aa).

Active-site residues include C112 and H237. Residues 238–242 (QANIR) form an ACP-binding region. N267 is an active-site residue.

Belongs to the thiolase-like superfamily. FabH family. Homodimer.

Its subcellular location is the cytoplasm. It carries out the reaction malonyl-[ACP] + acetyl-CoA + H(+) = 3-oxobutanoyl-[ACP] + CO2 + CoA. The protein operates within lipid metabolism; fatty acid biosynthesis. In terms of biological role, catalyzes the condensation reaction of fatty acid synthesis by the addition to an acyl acceptor of two carbons from malonyl-ACP. Catalyzes the first condensation reaction which initiates fatty acid synthesis and may therefore play a role in governing the total rate of fatty acid production. Possesses both acetoacetyl-ACP synthase and acetyl transacylase activities. Its substrate specificity determines the biosynthesis of branched-chain and/or straight-chain of fatty acids. This Bacillus pumilus (strain SAFR-032) protein is Beta-ketoacyl-[acyl-carrier-protein] synthase III.